Here is a 122-residue protein sequence, read N- to C-terminus: Large ribosomal subunit protein uL14 (122 aa).

Belongs to the universal ribosomal protein uL14 family. Part of the 50S ribosomal subunit. Forms a cluster with proteins L3 and L19. In the 70S ribosome, L14 and L19 interact and together make contacts with the 16S rRNA in bridges B5 and B8.

Its function is as follows. Binds to 23S rRNA. Forms part of two intersubunit bridges in the 70S ribosome. The chain is Large ribosomal subunit protein uL14 from Paracidovorax citrulli (strain AAC00-1) (Acidovorax citrulli).